Consider the following 148-residue polypeptide: Glutamate mutase sigma subunit 2 (148 aa).

Residues 1–134 (MRTVILGVIG…EALKADLGHR (134 aa)) enclose the B12-binding domain. Residues 11-15 (SDAHV), H14, 59-61 (SSL), and 90-94 (NLAVG) each bind adenosylcob(III)alamin. Positions 129 to 141 (ADLGHRSREEASS) are enriched in basic and acidic residues. A disordered region spans residues 129 to 148 (ADLGHRSREEASSEKVQLGS).

The protein belongs to the methylaspartate mutase GlmS subunit family. In terms of assembly, heterotetramer composed of 2 epsilon subunits (GlmE) and 2 sigma subunits (GlmS). GlmE exists as a homodimer and GlmS as a monomer. Adenosylcob(III)alamin serves as cofactor.

It catalyses the reaction (2S,3S)-3-methyl-L-aspartate = L-glutamate. It functions in the pathway amino-acid degradation; L-glutamate degradation via mesaconate pathway; acetate and pyruvate from L-glutamate: step 1/4. In terms of biological role, catalyzes the carbon skeleton rearrangement of L-glutamate to L-threo-3-methylaspartate ((2S,3S)-3-methylaspartate). This is Glutamate mutase sigma subunit 2 from Haloarcula marismortui (strain ATCC 43049 / DSM 3752 / JCM 8966 / VKM B-1809) (Halobacterium marismortui).